A 198-amino-acid chain; its full sequence is Ribonuclease 3-like protein 1 (198 aa).

The segment covering 85-110 has biased composition (basic and acidic residues); it reads KKLAPKPDEEHTTTTKPISKDDESKT. The interval 85–115 is disordered; that stretch reads KKLAPKPDEEHTTTTKPISKDDESKTRRGSA. A DRBM domain is found at 114 to 191; that stretch reads SAKSVLHEMC…AEGALWYLEH (78 aa).

In Arabidopsis thaliana (Mouse-ear cress), this protein is Ribonuclease 3-like protein 1 (RTL1).